A 354-amino-acid polypeptide reads, in one-letter code: Probable L-ascorbate-6-phosphate lactonase UlaG (354 aa).

This sequence belongs to the UlaG family. A divalent metal cation serves as cofactor.

Its subcellular location is the cytoplasm. The catalysed reaction is L-ascorbate 6-phosphate + H2O = 3-dehydro-L-gulonate 6-phosphate. The protein operates within cofactor degradation; L-ascorbate degradation; D-xylulose 5-phosphate from L-ascorbate: step 1/4. Probably catalyzes the hydrolysis of L-ascorbate-6-P into 3-keto-L-gulonate-6-P. Is essential for L-ascorbate utilization under anaerobic conditions. The sequence is that of Probable L-ascorbate-6-phosphate lactonase UlaG from Shigella flexneri.